The chain runs to 99 residues: Large ribosomal subunit protein uL23 (99 aa).

This sequence belongs to the universal ribosomal protein uL23 family. In terms of assembly, part of the 50S ribosomal subunit. Contacts protein L29, and trigger factor when it is bound to the ribosome.

In terms of biological role, one of the early assembly proteins it binds 23S rRNA. One of the proteins that surrounds the polypeptide exit tunnel on the outside of the ribosome. Forms the main docking site for trigger factor binding to the ribosome. In Shewanella loihica (strain ATCC BAA-1088 / PV-4), this protein is Large ribosomal subunit protein uL23.